We begin with the raw amino-acid sequence, 65 residues long: Large ribosomal subunit protein bL33 (65 aa).

Residues 17 to 40 (SRSVPSSEKRSAGVSRYTTEKNRR) form a disordered region.

It belongs to the bacterial ribosomal protein bL33 family.

This is Large ribosomal subunit protein bL33 from Prochlorococcus marinus (strain NATL1A).